The chain runs to 138 residues: DNA-directed RNA polymerase subunit omega (138 aa).

The interval 101-138 (AEDDDTLEADGLTIHDGADSDLDLSDDAGQDTDEADED) is disordered. Over residues 119–138 (DSDLDLSDDAGQDTDEADED) the composition is skewed to acidic residues.

It belongs to the RNA polymerase subunit omega family. In terms of assembly, the RNAP catalytic core consists of 2 alpha, 1 beta, 1 beta' and 1 omega subunit. When a sigma factor is associated with the core the holoenzyme is formed, which can initiate transcription.

The catalysed reaction is RNA(n) + a ribonucleoside 5'-triphosphate = RNA(n+1) + diphosphate. In terms of biological role, promotes RNA polymerase assembly. Latches the N- and C-terminal regions of the beta' subunit thereby facilitating its interaction with the beta and alpha subunits. The sequence is that of DNA-directed RNA polymerase subunit omega from Rhodospirillum rubrum (strain ATCC 11170 / ATH 1.1.1 / DSM 467 / LMG 4362 / NCIMB 8255 / S1).